The sequence spans 607 residues: Bifunctional endo-1,4-beta-xylanase A (607 aa).

An N-terminal signal peptide occupies residues 1–18 (MRTIKFFFAVAIATVAKA). A GH11 1 domain is found at 35 to 242 (NGQTQHKGVA…SSGIADVTKL (208 aa)). Glu-141 serves as the catalytic Nucleophile. Glu-223 acts as the Proton donor in catalysis. Over residues 248–272 (QKGSNPAPTSTGTVPSSSAGGSTAN) the composition is skewed to polar residues. A disordered region spans residues 248–284 (QKGSNPAPTSTGTVPSSSAGGSTANGKKFTVGNGQNQ). Positions 280-487 (NGQNQHKGVN…SSGVADVTLL (208 aa)) constitute a GH11 2 domain. The active-site Nucleophile is Glu-386. Glu-474 functions as the Proton donor in the catalytic mechanism. The disordered stretch occupies residues 493-514 (PKGSSPATSAAPRTTTRTTTRT). Residues 496–514 (SSPATSAAPRTTTRTTTRT) are compositionally biased toward low complexity. CBM10 domains lie at 523–563 (KCSA…CGCG) and 566–606 (QCSS…CGCG).

This sequence belongs to the glycosyl hydrolase 11 (cellulase G) family.

The enzyme catalyses Endohydrolysis of (1-&gt;4)-beta-D-xylosidic linkages in xylans.. It functions in the pathway glycan degradation; xylan degradation. In terms of biological role, hydrolyzes xylans into xylobiose and xylose. The polypeptide is Bifunctional endo-1,4-beta-xylanase A (XYNA) (Neocallimastix patriciarum (Rumen fungus)).